We begin with the raw amino-acid sequence, 242 residues long: Pyridoxine 5'-phosphate synthase (242 aa).

Asn-7 is a 3-amino-2-oxopropyl phosphate binding site. 9-10 (DH) lines the 1-deoxy-D-xylulose 5-phosphate pocket. Position 18 (Arg-18) interacts with 3-amino-2-oxopropyl phosphate. His-43 serves as the catalytic Proton acceptor. Residues Arg-45 and His-50 each coordinate 1-deoxy-D-xylulose 5-phosphate. Glu-70 acts as the Proton acceptor in catalysis. A 1-deoxy-D-xylulose 5-phosphate-binding site is contributed by Thr-100. His-190 functions as the Proton donor in the catalytic mechanism. 3-amino-2-oxopropyl phosphate contacts are provided by residues Gly-191 and 212-213 (GH).

The protein belongs to the PNP synthase family. In terms of assembly, homooctamer; tetramer of dimers.

Its subcellular location is the cytoplasm. The catalysed reaction is 3-amino-2-oxopropyl phosphate + 1-deoxy-D-xylulose 5-phosphate = pyridoxine 5'-phosphate + phosphate + 2 H2O + H(+). Its pathway is cofactor biosynthesis; pyridoxine 5'-phosphate biosynthesis; pyridoxine 5'-phosphate from D-erythrose 4-phosphate: step 5/5. Catalyzes the complicated ring closure reaction between the two acyclic compounds 1-deoxy-D-xylulose-5-phosphate (DXP) and 3-amino-2-oxopropyl phosphate (1-amino-acetone-3-phosphate or AAP) to form pyridoxine 5'-phosphate (PNP) and inorganic phosphate. The polypeptide is Pyridoxine 5'-phosphate synthase (Thermodesulfovibrio yellowstonii (strain ATCC 51303 / DSM 11347 / YP87)).